Here is a 240-residue protein sequence, read N- to C-terminus: Pyridoxine 5'-phosphate synthase (240 aa).

3-amino-2-oxopropyl phosphate is bound at residue asparagine 7. 9–10 (DH) serves as a coordination point for 1-deoxy-D-xylulose 5-phosphate. Arginine 18 contacts 3-amino-2-oxopropyl phosphate. Histidine 43 functions as the Proton acceptor in the catalytic mechanism. 1-deoxy-D-xylulose 5-phosphate-binding residues include arginine 45 and histidine 50. The Proton acceptor role is filled by glutamate 70. Threonine 100 provides a ligand contact to 1-deoxy-D-xylulose 5-phosphate. Residue histidine 191 is the Proton donor of the active site. Residues glycine 192 and 213–214 (GH) contribute to the 3-amino-2-oxopropyl phosphate site.

This sequence belongs to the PNP synthase family. In terms of assembly, homooctamer; tetramer of dimers.

It is found in the cytoplasm. It catalyses the reaction 3-amino-2-oxopropyl phosphate + 1-deoxy-D-xylulose 5-phosphate = pyridoxine 5'-phosphate + phosphate + 2 H2O + H(+). It participates in cofactor biosynthesis; pyridoxine 5'-phosphate biosynthesis; pyridoxine 5'-phosphate from D-erythrose 4-phosphate: step 5/5. In terms of biological role, catalyzes the complicated ring closure reaction between the two acyclic compounds 1-deoxy-D-xylulose-5-phosphate (DXP) and 3-amino-2-oxopropyl phosphate (1-amino-acetone-3-phosphate or AAP) to form pyridoxine 5'-phosphate (PNP) and inorganic phosphate. The protein is Pyridoxine 5'-phosphate synthase of Trichodesmium erythraeum (strain IMS101).